Consider the following 353-residue polypeptide: UPF0283 membrane protein Spro_2618 (353 aa).

The next 3 membrane-spanning stretches (helical) occupy residues 71-91 (MVTAGLTLFGVSVVAQGVQWV), 101-121 (IAMGGGVAGGLIVFAGVGSVV), and 214-234 (ESTLMIAVSPLAVVDMAFIAW).

It belongs to the UPF0283 family.

It localises to the cell inner membrane. The protein is UPF0283 membrane protein Spro_2618 of Serratia proteamaculans (strain 568).